A 602-amino-acid polypeptide reads, in one-letter code: tRNA uridine 5-carboxymethylaminomethyl modification enzyme MnmG (602 aa).

Gly10–Gly15 lines the FAD pocket. A disordered region spans residues Asp217–Thr242. Gly267–Phe281 lines the NAD(+) pocket.

The protein belongs to the MnmG family. Homodimer. Heterotetramer of two MnmE and two MnmG subunits. FAD serves as cofactor.

The protein localises to the cytoplasm. Functionally, NAD-binding protein involved in the addition of a carboxymethylaminomethyl (cmnm) group at the wobble position (U34) of certain tRNAs, forming tRNA-cmnm(5)s(2)U34. The sequence is that of tRNA uridine 5-carboxymethylaminomethyl modification enzyme MnmG from Deinococcus geothermalis (strain DSM 11300 / CIP 105573 / AG-3a).